The sequence spans 757 residues: Subtilisin-like protease SBT1.7 (757 aa).

The first 24 residues, 1 to 24 (MSSSFLSSTAFFLLLCLGFCHVSS), serve as a signal peptide directing secretion. The propeptide occupies 25–106 (SSSDQGTYIV…VLPEHRYELH (82 aa)). One can recognise an Inhibitor I9 domain in the interval 31-106 (TYIVHMAKSQ…VLPEHRYELH (76 aa)). Residues 102-610 (RYELHTTRTP…AGHVSPTTAT (509 aa)) form the Peptidase S8 domain. The active-site Charge relay system is the Asp139. Residue Asn170 is glycosylated (N-linked (GlcNAc...) asparagine). The disordered stretch occupies residues 196-219 (PIDESKESRSPRDDDGHGTHTSST). Residues 198–213 (DESKESRSPRDDDGHG) show a composition bias toward basic and acidic residues. Residue His212 is the Charge relay system of the active site. N-linked (GlcNAc...) asparagine glycans are attached at residues Asn352, Asn376, and Asn379. Catalysis depends on Ser542, which acts as the Charge relay system. Asn631 and Asn644 each carry an N-linked (GlcNAc...) asparagine glycan.

This sequence belongs to the peptidase S8 family. As to expression, expressed in immature siliques and at lower levels in stems and flowers. Widely expressed at low levels.

It is found in the secreted. Its subcellular location is the cell wall. With respect to regulation, activated by calcium. Inhibited by the serine protease inhibitors 4-(2-aminoethyl)benzenesulphonyl fluoride (AEBSF), PMSF, di-isopropyl phosphofluoridate (DFP) and soybean trypsin inhibitor (SBTI). Not inhibited by benzamidine or iodoacetamide. Leupeptin and pepstatin A have a minor inhibitory action. Functionally, serine protease. Has a substrate preference for the hydrophobic residues Phe and Ala and the basic residue Asp in the P1 position, and for Asp, Leu or Ala in the P1' position. Essential for mucilage release from seed coats. Triggers the accumulation and/or activation of cell wall modifying enzymes necessary either for the loosening of the outer primary cell wall, or to facilitate swelling of the mucilage. This chain is Subtilisin-like protease SBT1.7, found in Arabidopsis thaliana (Mouse-ear cress).